The primary structure comprises 442 residues: UDP-N-acetylmuramate--L-alanine ligase (442 aa).

Residue 109–115 (GAHGKTS) coordinates ATP.

This sequence belongs to the MurCDEF family.

The protein resides in the cytoplasm. It catalyses the reaction UDP-N-acetyl-alpha-D-muramate + L-alanine + ATP = UDP-N-acetyl-alpha-D-muramoyl-L-alanine + ADP + phosphate + H(+). It participates in cell wall biogenesis; peptidoglycan biosynthesis. In terms of biological role, cell wall formation. The polypeptide is UDP-N-acetylmuramate--L-alanine ligase (Streptococcus pyogenes serotype M49 (strain NZ131)).